The following is a 662-amino-acid chain: Probable protein phosphatase 2C 4 (662 aa).

Residue Ser-153 is modified to Phosphoserine. Positions 249–653 constitute a PPM-type phosphatase domain; that stretch reads DVSLENQNLQ…DDVSIVVISL (405 aa). Residues Asp-286, Gly-287, Asp-581, and Asp-644 each contribute to the Mn(2+) site.

The protein belongs to the PP2C family. Mg(2+) serves as cofactor. Mn(2+) is required as a cofactor. As to expression, expressed in seedlings, roots, leaves, stems, young inflorescences, flowers and siliques.

The protein localises to the nucleus. The enzyme catalyses O-phospho-L-seryl-[protein] + H2O = L-seryl-[protein] + phosphate. It carries out the reaction O-phospho-L-threonyl-[protein] + H2O = L-threonyl-[protein] + phosphate. Its function is as follows. Involved in leaf development regulation. This Arabidopsis thaliana (Mouse-ear cress) protein is Probable protein phosphatase 2C 4 (PLL5).